The following is a 212-amino-acid chain: ATP-dependent dethiobiotin synthetase BioD (212 aa).

Position 12–17 (12–17) interacts with ATP; it reads DCGKTF. Residue Thr-16 participates in Mg(2+) binding. The active site involves Lys-33. Substrate is bound at residue Ser-37. Residues Asp-50, 110–113, and 170–171 each bind ATP; these read EGAG and NC. Mg(2+) is bound by residues Asp-50 and Glu-110.

The protein belongs to the dethiobiotin synthetase family. In terms of assembly, homodimer. The cofactor is Mg(2+).

It localises to the cytoplasm. The enzyme catalyses (7R,8S)-7,8-diammoniononanoate + CO2 + ATP = (4R,5S)-dethiobiotin + ADP + phosphate + 3 H(+). Its pathway is cofactor biosynthesis; biotin biosynthesis; biotin from 7,8-diaminononanoate: step 1/2. Catalyzes a mechanistically unusual reaction, the ATP-dependent insertion of CO2 between the N7 and N8 nitrogen atoms of 7,8-diaminopelargonic acid (DAPA, also called 7,8-diammoniononanoate) to form a ureido ring. In Legionella pneumophila subsp. pneumophila (strain Philadelphia 1 / ATCC 33152 / DSM 7513), this protein is ATP-dependent dethiobiotin synthetase BioD.